The chain runs to 1601 residues: PH and SEC7 domain-containing protein (1601 aa).

The interval Met1 to Arg340 is mediates regulation of axon branching and microtubule organization. The region spanning Lys6–Pro88 is the PDZ domain. Disordered regions lie at residues Asn113–Lys192, Thr211–Ala322, Ser339–Asn440, Leu459–Gly657, Asn737–Ala780, Gln872–Cys965, and Gln1040–Glu1126. Residues His118 to His128 show a composition bias toward polar residues. Low complexity predominate over residues Ala166–Thr191. A compositionally biased stretch (polar residues) spans Gln283–Thr297. Basic and acidic residues predominate over residues Arg300–Glu311. The short motif at Pro323–Arg340 is the Microtubule elimination domain (MTED); Binds tubulin and blocks microtubule polymerization element. Over residues Ser339–Leu348 the composition is skewed to polar residues. The segment covering Lys353–Pro362 has biased composition (basic and acidic residues). 3 stretches are compositionally biased toward low complexity: residues Ser382–Asp399, Gln409–Gln424, and Gln468–Tyr487. Positions Gln488 to Glu505 are enriched in acidic residues. Positions Tyr510–Gln519 are enriched in polar residues. The segment covering Asp526–Tyr557 has biased composition (acidic residues). Polar residues-rich tracts occupy residues Ser558–Ala567 and Thr617–Thr630. The span at Ser640–Gly657 shows a compositional bias: low complexity. Positions Asn737–Gly747 are enriched in polar residues. Low complexity-rich tracts occupy residues Asn752–Ala780, Gln872–Gln942, Gly949–Cys965, and Gln1040–Gln1052. The segment at Ser894–Lys1601 is mediates association to the membrane and rescricts the microtubule-inhibiting activity to the cell cortex. The span at Gln1053–Val1071 shows a compositional bias: basic and acidic residues. The region spanning Val1125–Lys1291 is the SEC7 domain. Positions Val1332 to Ala1445 constitute a PH domain. Residues Leu1544 to Lys1601 are disordered. Over residues Thr1568–Asn1579 the composition is skewed to polar residues.

This sequence belongs to the PSD family. In terms of assembly, interacts (via MTED motif) with tubulin. Expressed in the head (at protein level).

The protein resides in the cell projection. It is found in the axon. It localises to the cytoplasm. The protein localises to the cell membrane. Its subcellular location is the cell cortex. Functionally, guanine nucleotide exchange factor for Arf6. Regulates axon growth and branching by inhibiting microtubule polymerisation at the cortex. Together with shot, promotes axonal microtubule bundle integrity. Required for normal ethanol-induced tolerance and preference. Probably by activating Arf6, counteracts ethanol-induced sedation. This chain is PH and SEC7 domain-containing protein, found in Drosophila melanogaster (Fruit fly).